Consider the following 316-residue polypeptide: PAK4-inhibitor inka1 (316 aa).

The interval 108-130 is disordered; the sequence is YSEVSGSSLRGEEDDIVEEESET. Over residues 119–128 the composition is skewed to acidic residues; sequence EEDDIVEEES. Inka box regions lie at residues 182–219 and 289–316; these read DSQD…DLPE and SDIA…AGFL.

This sequence belongs to the INKA family. As to quaternary structure, interacts with pak4/pak5.

It is found in the nucleus. Its subcellular location is the cytoplasm. Functionally, inhibitor of the serine/threonine-protein kinase pak4/pak5. Acts by binding pak4/pak5 in a substrate-like manner, inhibiting the protein kinase activity. Required for the proper migration of neural crest cells during embryonic development, probably by inhibiting pak4/pak5. The protein is PAK4-inhibitor inka1 of Xenopus laevis (African clawed frog).